Consider the following 146-residue polypeptide: Large ribosomal subunit protein bL9 (146 aa).

This sequence belongs to the bacterial ribosomal protein bL9 family. Part of the 50S ribosomal subunit. Contacts protein L31.

Functionally, binds to the 23S rRNA and protein L31. This chain is Large ribosomal subunit protein bL9 (rplI), found in Deinococcus radiodurans (strain ATCC 13939 / DSM 20539 / JCM 16871 / CCUG 27074 / LMG 4051 / NBRC 15346 / NCIMB 9279 / VKM B-1422 / R1).